The sequence spans 306 residues: Aspartate carbamoyltransferase catalytic subunit (306 aa).

Residues Arg54 and Thr55 each contribute to the carbamoyl phosphate site. L-aspartate is bound at residue Lys83. Carbamoyl phosphate contacts are provided by Arg104, His132, and Gln135. Arg165 and Arg227 together coordinate L-aspartate. Carbamoyl phosphate-binding residues include Leu266 and Pro267.

This sequence belongs to the aspartate/ornithine carbamoyltransferase superfamily. ATCase family. In terms of assembly, heterododecamer (2C3:3R2) of six catalytic PyrB chains organized as two trimers (C3), and six regulatory PyrI chains organized as three dimers (R2).

It catalyses the reaction carbamoyl phosphate + L-aspartate = N-carbamoyl-L-aspartate + phosphate + H(+). It functions in the pathway pyrimidine metabolism; UMP biosynthesis via de novo pathway; (S)-dihydroorotate from bicarbonate: step 2/3. In terms of biological role, catalyzes the condensation of carbamoyl phosphate and aspartate to form carbamoyl aspartate and inorganic phosphate, the committed step in the de novo pyrimidine nucleotide biosynthesis pathway. The polypeptide is Aspartate carbamoyltransferase catalytic subunit (Clostridium novyi (strain NT)).